The chain runs to 582 residues: Protein alan shepard (582 aa).

Positions 1 to 12 are enriched in pro residues; sequence MHPRYSPAPPPQ. A disordered region spans residues 1–73; sequence MHPRYSPAPP…AAPPTSRSAF (73 aa). Tyr5 bears the Phosphotyrosine mark. Low complexity predominate over residues 13–24; it reads QQQQMGGPLHQQ. Gly residues predominate over residues 25–36; the sequence is QGGGGGGGGGIR. Positions 39 to 57 are enriched in polar residues; it reads SNAQQLPPQIPRSQNYSNG. Residues 58–72 are compositionally biased toward low complexity; that stretch reads SSSSAAAAPPTSRSA. Residues Tyr125 and Tyr142 each carry the phosphotyrosine modification. The tract at residues 164 to 225 is disordered; sequence PATTTYGQRV…TVQNQNQQGG (62 aa). Residues 178-225 show a composition bias toward low complexity; sequence SPSNTNSSSSSNTGSQSGTLSTSLSNTTNTNTNMGPNGTVQNQNQQGG. RRM domains are found at residues 231–304 and 310–389; these read TNLY…MAKQ and TNLY…FADG. Residues 555 to 582 are disordered; it reads PMTDSEQASTAASPDEAYTQYPHQAAPK.

Functionally, has a role in the perception of gravity. This is Protein alan shepard from Drosophila yakuba (Fruit fly).